The primary structure comprises 541 residues: Glutamine-dependent NAD(+) synthetase (541 aa).

The region spanning 4–243 (FKIALAQFSP…EELYYSEFDI (240 aa)) is the CN hydrolase domain. E44 serves as the catalytic Proton acceptor; for glutaminase activity. The For glutaminase activity role is filled by K111. Residue Y117 participates in L-glutamine binding. C147 serves as the catalytic Nucleophile; for glutaminase activity. L-glutamine is bound by residues S173 and K179. Residue 286–293 (GLSGGIDS) participates in ATP binding. N369 provides a ligand contact to deamido-NAD(+). T393 serves as a coordination point for ATP. The deamido-NAD(+) site is built by E398 and K510.

In the C-terminal section; belongs to the NAD synthetase family.

It catalyses the reaction deamido-NAD(+) + L-glutamine + ATP + H2O = L-glutamate + AMP + diphosphate + NAD(+) + H(+). Its pathway is cofactor biosynthesis; NAD(+) biosynthesis; NAD(+) from deamido-NAD(+) (L-Gln route): step 1/1. Its function is as follows. Catalyzes the ATP-dependent amidation of deamido-NAD to form NAD. Uses L-glutamine as a nitrogen source. In vitro, can also use ammonia as donor with comparable specific activity, but cannot use nicotinate mononucleotide (NaMN) as substrate. The sequence is that of Glutamine-dependent NAD(+) synthetase from Acinetobacter baylyi (strain ATCC 33305 / BD413 / ADP1).